Consider the following 62-residue polypeptide: Keratin-associated protein 19-5 (62 aa).

Positions 5-56 are 14 X 2 AA repeats of G-[YCGS]; the sequence is GSYYGGLGSGIRGFGNLGYGYGCGCGFGGYGYGSGYGRYGYGYPRPLYYGGY.

It belongs to the KRTAP type 19 family. In terms of assembly, interacts with hair keratins. Expressed in skin during two hair growth cycles. Expression restricted to the cortical cells of hair follicles, appearing first in the cortical cells processing the flat nuclei located a few cells above the dermal papilla.

In terms of biological role, in the hair cortex, hair keratin intermediate filaments are embedded in an interfilamentous matrix, consisting of hair keratin-associated proteins (KRTAP), which are essential for the formation of a rigid and resistant hair shaft through their extensive disulfide bond cross-linking with abundant cysteine residues of hair keratins. The matrix proteins include the high-sulfur and high-glycine-tyrosine keratins. In Mus musculus (Mouse), this protein is Keratin-associated protein 19-5 (Krtap19-5).